A 239-amino-acid polypeptide reads, in one-letter code: Pyridoxine 5'-phosphate synthase (239 aa).

3-amino-2-oxopropyl phosphate is bound at residue Asn-7. Asp-9–His-10 serves as a coordination point for 1-deoxy-D-xylulose 5-phosphate. Arg-18 is a binding site for 3-amino-2-oxopropyl phosphate. Residue His-43 is the Proton acceptor of the active site. Residues Arg-45 and His-50 each contribute to the 1-deoxy-D-xylulose 5-phosphate site. Glu-70 functions as the Proton acceptor in the catalytic mechanism. Residue Thr-100 participates in 1-deoxy-D-xylulose 5-phosphate binding. His-191 acts as the Proton donor in catalysis. Residues Gly-192 and Gly-213–His-214 contribute to the 3-amino-2-oxopropyl phosphate site.

It belongs to the PNP synthase family. As to quaternary structure, homooctamer; tetramer of dimers.

It localises to the cytoplasm. It carries out the reaction 3-amino-2-oxopropyl phosphate + 1-deoxy-D-xylulose 5-phosphate = pyridoxine 5'-phosphate + phosphate + 2 H2O + H(+). The protein operates within cofactor biosynthesis; pyridoxine 5'-phosphate biosynthesis; pyridoxine 5'-phosphate from D-erythrose 4-phosphate: step 5/5. Catalyzes the complicated ring closure reaction between the two acyclic compounds 1-deoxy-D-xylulose-5-phosphate (DXP) and 3-amino-2-oxopropyl phosphate (1-amino-acetone-3-phosphate or AAP) to form pyridoxine 5'-phosphate (PNP) and inorganic phosphate. This chain is Pyridoxine 5'-phosphate synthase, found in Gloeobacter violaceus (strain ATCC 29082 / PCC 7421).